Here is a 224-residue protein sequence, read N- to C-terminus: tRNA (guanine-N(7)-)-methyltransferase (224 aa).

S-adenosyl-L-methionine-binding residues include Glu45, Glu70, Asp97, and Asp119. Asp119 is an active-site residue. Substrate contacts are provided by residues Lys123, Asp155, and 199-202 (TEYE).

The protein belongs to the class I-like SAM-binding methyltransferase superfamily. TrmB family.

It catalyses the reaction guanosine(46) in tRNA + S-adenosyl-L-methionine = N(7)-methylguanosine(46) in tRNA + S-adenosyl-L-homocysteine. Its pathway is tRNA modification; N(7)-methylguanine-tRNA biosynthesis. Catalyzes the formation of N(7)-methylguanine at position 46 (m7G46) in tRNA. The sequence is that of tRNA (guanine-N(7)-)-methyltransferase from Ureaplasma urealyticum serovar 10 (strain ATCC 33699 / Western).